The sequence spans 393 residues: ATP phosphoribosyltransferase regulatory subunit (393 aa).

This sequence belongs to the class-II aminoacyl-tRNA synthetase family. HisZ subfamily. In terms of assembly, heteromultimer composed of HisG and HisZ subunits.

It localises to the cytoplasm. The protein operates within amino-acid biosynthesis; L-histidine biosynthesis; L-histidine from 5-phospho-alpha-D-ribose 1-diphosphate: step 1/9. Functionally, required for the first step of histidine biosynthesis. May allow the feedback regulation of ATP phosphoribosyltransferase activity by histidine. This chain is ATP phosphoribosyltransferase regulatory subunit, found in Chromohalobacter salexigens (strain ATCC BAA-138 / DSM 3043 / CIP 106854 / NCIMB 13768 / 1H11).